Here is a 229-residue protein sequence, read N- to C-terminus: uncharacterized protein (229 aa).

The segment at 1–102 (MKLLGRKKSY…AASKAQITDR (102 aa)) is disordered. The segment covering 73 to 94 (ARRKSLAPPKCHRAERRAKRAA) has biased composition (basic residues). 2 helical membrane passes run 137 to 157 (LGLFTPSALVLLFITFGVPQL) and 159 to 179 (LYMSPAMLVLLSVMGIDGIIL).

Its subcellular location is the cell membrane. This is an uncharacterized protein from Mycobacterium leprae (strain TN).